The chain runs to 1156 residues: Nitric oxide synthase, inducible (1156 aa).

Residues 23–27 carry the DINNN-motif; mediates interaction with SPSB1, SPSB2 and SPSB4 motif; that stretch reads DINNN. Residues 27–84 are disordered; it reads NVGKFYQPPSSPVTQDDPKRHSPGKHGNESPQPLTGTVKTSPESLSKLDAPPSACPRH. Positions 55 to 70 are enriched in polar residues; the sequence is ESPQPLTGTVKTSPES. Positions 110 and 115 each coordinate Zn(2+). Residue serine 118 participates in (6R)-L-erythro-5,6,7,8-tetrahydrobiopterin binding. Position 200 (cysteine 200) interacts with heme b. Positions 263, 372, 373, and 377 each coordinate L-arginine. (6R)-L-erythro-5,6,7,8-tetrahydrobiopterin-binding residues include arginine 381, isoleucine 462, tryptophan 463, and phenylalanine 476. Tyrosine 491 contacts heme b. The segment at 515-535 is calmodulin-binding; that stretch reads FKVLVKAVFFASVLMHKAMAS. Residues 539–677 enclose the Flavodoxin-like domain; that stretch reads ATILFATETG…AFRSWAVQTF (139 aa). Residues threonine 545, glutamate 546, threonine 547, arginine 549, and serine 550 each contribute to the FMN site. Residue tyrosine 575 is modified to Phosphotyrosine. The FMN site is built by serine 591, threonine 592, serine 628, cysteine 635, glutamate 661, and glutamine 665. Residues 730-970 enclose the FAD-binding FR-type domain; sequence KHVFTMRLKS…VRSASGFQLP (241 aa). Arginine 750 serves as a coordination point for NADP(+). Residues histidine 772, arginine 906, tyrosine 908, serine 909, threonine 924, and alanine 926 each coordinate FAD. Position 929 (threonine 929) interacts with NADP(+). Tyrosine 930, valine 943, cysteine 944, and serine 945 together coordinate FAD. Residues threonine 984, arginine 1017, serine 1046, arginine 1047, lysine 1053, tyrosine 1055, glutamine 1057, and aspartate 1090 each contribute to the NADP(+) site.

It belongs to the NOS family. Homodimer. Interacts with NHERF1. Interacts with GAPDH; induced by oxidatively-modified low-densitity lipoprotein (LDL(ox)). Interacts with S100A8 and S100A9 to form the iNOS-S100A8/9 transnitrosylase complex. Interacts with SPSB1, SPSB2 and SPSB4. Interacts with ELOC and CUL5 in the presence of SPSB1 or SPSB2 or SPSB4. Forms a complex with ASL, ASS1 and HSP90AA1; the complex regulates cell-autonomous L-arginine synthesis and citrulline recycling while channeling extracellular L-arginine to nitric oxide synthesis pathway. Heme b serves as cofactor. FAD is required as a cofactor. The cofactor is FMN. Requires (6R)-L-erythro-5,6,7,8-tetrahydrobiopterin as cofactor. In terms of processing, polyubiquitinated; mediated by SPSB1, SPSB2 and SPSB4, leading to proteasomal degradation.

It localises to the cytoplasm. It is found in the cytosol. The catalysed reaction is 2 L-arginine + 3 NADPH + 4 O2 + H(+) = 2 L-citrulline + 2 nitric oxide + 3 NADP(+) + 4 H2O. Regulated by calcium/calmodulin. In terms of biological role, produces nitric oxide (NO) which is a messenger molecule with diverse functions throughout the body. In macrophages, NO mediates tumoricidal and bactericidal actions. Also has nitrosylase activity and mediates cysteine S-nitrosylation of cytoplasmic target proteins such PTGS2/COX2. As component of the iNOS-S100A8/9 transnitrosylase complex involved in the selective inflammatory stimulus-dependent S-nitrosylation of GAPDH implicated in regulation of the GAIT complex activity and probably multiple targets including ANXA5, EZR, MSN and VIM. Involved in inflammation, enhances the synthesis of pro-inflammatory mediators such as IL6 and IL8. In Bos taurus (Bovine), this protein is Nitric oxide synthase, inducible (NOS2).